We begin with the raw amino-acid sequence, 133 residues long: uncharacterized protein (133 aa).

This is an uncharacterized protein from Aquifex aeolicus (strain VF5).